Here is a 581-residue protein sequence, read N- to C-terminus: MLIKSEYKPRMLPKEEQVKKPMTSNGRISFVLMAIAVLFAGLIARGLYLQTVTYNFLKEQGDNRIVRTQTLPATRGTVSDRNGAVLALSAPTESLFAVPKEMKEMPSAAQLERLSELVDVPVDVLRNKLEQKGKSFIWIKRQLDPKVAEEVKALGLENFVFEKELKRHYPMGNLFAHVIGFTDIDGKGQEGLELSLEDSLHGEDGAEVVLRDRQGNIVDSLDSPRNKAPKNGKDIILSLDQRIQTLAYEELNKAVEYHQAKAGTVVVLDARTGEILALANTPAYDPNRPGRADSEQRRNRAVTDMIEPGSAIKPFVIAKALDAGKTDLNERLNTQPYKIGPSPVRDTHVYPSLDVRGIMQKSSNVGTSKLSARFGAEEMYDFYHELGIGVRMHSGFPGETAGLLRNWRRWRPIEQATMSFGYGLQLSLLQLARAYTALTHDGVLLPVSFEKQAVAPQGKRIFKESTAREVRNLMVSVTEPGGTGTAGAVDGFDVGAKTGTARKFVNGRYADNKHIATFIGFAPAKNPRVIVAVTIDEPTAHGYYGGVVAGPPFKKIMGGSLNILGISPTKPLTAAAVKTPS.

Residues 28-48 (ISFVLMAIAVLFAGLIARGLY) form a helical membrane-spanning segment. Serine 310 (acyl-ester intermediate) is an active-site residue.

This sequence belongs to the transpeptidase family. FtsI subfamily.

The protein resides in the cell inner membrane. It carries out the reaction Preferential cleavage: (Ac)2-L-Lys-D-Ala-|-D-Ala. Also transpeptidation of peptidyl-alanyl moieties that are N-acyl substituents of D-alanine.. It participates in cell wall biogenesis; peptidoglycan biosynthesis. Catalyzes cross-linking of the peptidoglycan cell wall at the division septum. The chain is Probable peptidoglycan D,D-transpeptidase PenA from Neisseria meningitidis serogroup A / serotype 4A (strain DSM 15465 / Z2491).